Here is a 738-residue protein sequence, read N- to C-terminus: 1,4-alpha-glucan branching enzyme GlgB (738 aa).

Catalysis depends on aspartate 417, which acts as the Nucleophile. The active-site Proton donor is glutamate 472.

This sequence belongs to the glycosyl hydrolase 13 family. GlgB subfamily. In terms of assembly, monomer.

It carries out the reaction Transfers a segment of a (1-&gt;4)-alpha-D-glucan chain to a primary hydroxy group in a similar glucan chain.. Its pathway is glycan biosynthesis; glycogen biosynthesis. In terms of biological role, catalyzes the formation of the alpha-1,6-glucosidic linkages in glycogen by scission of a 1,4-alpha-linked oligosaccharide from growing alpha-1,4-glucan chains and the subsequent attachment of the oligosaccharide to the alpha-1,6 position. This Burkholderia pseudomallei (strain K96243) protein is 1,4-alpha-glucan branching enzyme GlgB.